A 95-amino-acid polypeptide reads, in one-letter code: Large ribosomal subunit protein uL23 (95 aa).

It belongs to the universal ribosomal protein uL23 family. In terms of assembly, contacts protein L29, and trigger factor when it is bound to the ribosome. Part of the 50S ribosomal subunit.

One of the early assembly proteins it binds 23S rRNA. One of the proteins that surrounds the polypeptide exit tunnel on the outside of the ribosome. Forms the main docking site for trigger factor binding to the ribosome. This Geobacillus stearothermophilus (Bacillus stearothermophilus) protein is Large ribosomal subunit protein uL23.